The following is a 152-amino-acid chain: Prostaglandin E synthase (152 aa).

At 1–12 (MPAHSLAMSSPA) the chain is on the lumenal side. Residues 13–41 (LPAFLLCSTLLVIKMYVVAIITGQVRLRK) form a helical membrane-spanning segment. Arg-38 contacts glutathione. Residues 42-60 (KAFANPEDALRHGGPQYCR) are Cytoplasmic-facing. A helical membrane pass occupies residues 61 to 90 (SDPDVERCLRAHRNDMETIYPFLFLGFVYS). 73 to 77 (RNDME) lines the glutathione pocket. The Lumenal portion of the chain corresponds to 91 to 95 (FLGPN). A helical membrane pass occupies residues 96–119 (PFVAWMHFLVFLLGRVVHTVAYLG). Residues His-113 and Tyr-117 each contribute to the glutathione site. The Cytoplasmic segment spans residues 120–123 (KLRA). A helical transmembrane segment spans residues 124–152 (PIRSVTYTLAQLPCASMALQILWEAARHL). Glutathione is bound at residue 126–130 (RSVTY).

Belongs to the MAPEG family. In terms of assembly, homotrimer. The cofactor is glutathione.

The protein resides in the membrane. It is found in the cytoplasm. It localises to the perinuclear region. It carries out the reaction prostaglandin H2 = prostaglandin E2. It catalyses the reaction 2-glyceryl-prostaglandin H2 = 2-glyceryl-prostaglandin E2. The enzyme catalyses prostaglandin G2 = (15S)-15-hydroperoxy-prostaglandin E2. The catalysed reaction is 1-chloro-2,4-dinitrobenzene + glutathione = 2,4-dinitrophenyl-S-glutathione + chloride + H(+). It carries out the reaction (5S)-hydroperoxy-(6E,8Z,11Z,14Z)-eicosatetraenoate + 2 glutathione = (5S)-hydroxy-(6E,8Z,11Z,14Z)-eicosatetraenoate + glutathione disulfide + H2O. Its pathway is lipid metabolism; prostaglandin biosynthesis. Its function is as follows. Terminal enzyme of the cyclooxygenase (COX)-2-mediated prostaglandin E2 (PGE2) biosynthetic pathway. Catalyzes the glutathione-dependent oxidoreduction of prostaglandin endoperoxide H2 (PGH2) to prostaglandin E2 (PGE2) in response to inflammatory stimuli. Plays a key role in inflammation response, fever and pain. Also catalyzes the oxidoreduction of endocannabinoids into prostaglandin glycerol esters and PGG2 into 15-hydroperoxy-PGE2. In addition, displays low glutathione transferase and glutathione-dependent peroxidase activities, toward 1-chloro-2,4-dinitrobenzene and 5-hydroperoxyicosatetraenoic acid (5-HPETE), respectively. This is Prostaglandin E synthase (PTGES) from Macaca fascicularis (Crab-eating macaque).